The primary structure comprises 404 residues: Argininosuccinate synthase (404 aa).

9–17 is an ATP binding site; the sequence is AYSGGLDTS. Residue Tyr86 coordinates L-citrulline. Gly116 provides a ligand contact to ATP. 3 residues coordinate L-aspartate: Thr118, Asn122, and Asp123. Asn122 serves as a coordination point for L-citrulline. Residues Arg126, Ser174, Ser183, Glu259, and Tyr271 each contribute to the L-citrulline site.

It belongs to the argininosuccinate synthase family. Type 1 subfamily. In terms of assembly, homotetramer.

The protein localises to the cytoplasm. It catalyses the reaction L-citrulline + L-aspartate + ATP = 2-(N(omega)-L-arginino)succinate + AMP + diphosphate + H(+). The protein operates within amino-acid biosynthesis; L-arginine biosynthesis; L-arginine from L-ornithine and carbamoyl phosphate: step 2/3. In Listeria welshimeri serovar 6b (strain ATCC 35897 / DSM 20650 / CCUG 15529 / CIP 8149 / NCTC 11857 / SLCC 5334 / V8), this protein is Argininosuccinate synthase.